A 50-amino-acid polypeptide reads, in one-letter code: Defensin D4 (50 aa).

4 disulfide bridges follow: cysteine 3–cysteine 50, cysteine 14–cysteine 35, cysteine 20–cysteine 44, and cysteine 24–cysteine 46.

In terms of tissue distribution, detected in seeds (at protein level).

It is found in the secreted. Functionally, antimicrobial peptide with antifungal activity. In Nigella sativa (Black cumin), this protein is Defensin D4.